Here is a 259-residue protein sequence, read N- to C-terminus: MQVDLLSSAQSAHALHLFHQHSPLVHCMTNDVVQTFTANTLLALGASPAMVIETEEASQFAAIASALLINVGTLTQPRAQAMSAAVEQAQTPWTLDPVAVGALDYRRRFCVELLSHKPTAIRGNASEIMALAGVANGGRGVDTTDAAANAIPAAQTLARETGAIVVVTGEVDYVTDGHRIVGIHGGDPLMTKVVGTGCALSAVVAACCALPGDTLENVASACHWMKQAGERAVARSEGPGSFVPHFLDALWQLAQEVQA.

Substrate is bound at residue Met50. Residues Arg122 and Thr168 each contribute to the ATP site. Gly195 lines the substrate pocket.

This sequence belongs to the Thz kinase family. Mg(2+) serves as cofactor.

The enzyme catalyses 5-(2-hydroxyethyl)-4-methylthiazole + ATP = 4-methyl-5-(2-phosphooxyethyl)-thiazole + ADP + H(+). The protein operates within cofactor biosynthesis; thiamine diphosphate biosynthesis; 4-methyl-5-(2-phosphoethyl)-thiazole from 5-(2-hydroxyethyl)-4-methylthiazole: step 1/1. Functionally, catalyzes the phosphorylation of the hydroxyl group of 4-methyl-5-beta-hydroxyethylthiazole (THZ). The sequence is that of Hydroxyethylthiazole kinase from Escherichia coli O127:H6 (strain E2348/69 / EPEC).